The sequence spans 670 residues: MEVLKLCLLLTRKKQFEVELIPEKIGARRPWKLETSSTATEAVVSVVTYLEATSGNARDAKEAGIYIRVYGAGWMIPEFVRMLMLHYSKHGECILQEIGAAFRGEHATDLLLICDGKETVRAHKLVLAAASPLIRMILEETPVLDGVTTVYFPEVQVSYFRLLLDFLYSGQVYVRSVEEYHHLQDLLALLQIKASIWKNSDGSDAGEPRKSEPLVDINRNTEGITGSSVVHQHPSRRRRSKSQDSLSGDSASGGGGTGSQAGTPKKVSVKSERHSAGSSVDGDGDRDREENLEYLDEVEEAIIKSNNNHPLHPHQHHLVAGSGGHHLHHHHHHHHRQLHQISRHDGDDDAGGGSGNDGASEGGSGESGRAGSVAGESAGDRPTPTNLSSGGGGAGSGRRSGSGEPTEPAEDDEDYELDVEDRGGDGDEAAGEGETRSRRSDPSANRRRSSSDPVNLSIVKQQQDVDSDDANIDVETIGTATTKTLLPPRYLDPFRTKRKAAAYYIHPADAEALKPMDHEGLLHNSPDNYVVTPHRKRRPGFHNSPAQNPPFVPSYLDDLRARSKCFLSAPPTYLPEKYLSVLTRWNLKTHLRVHTGEKPFACRLCVAMFKQKAHLLKHLCSVHRNIINAPEAGGRYTCCFCSLVFETLQELVRHLSGHHNNLLLSKNLHE.

The region spanning 108-176 (TDLLLICDGK…LYSGQVYVRS (69 aa)) is the BTB domain. Disordered regions lie at residues 200–288 (SDGS…DRDR) and 307–470 (NNHP…SDDA). The span at 218 to 230 (NRNTEGITGSSVV) shows a compositional bias: polar residues. Residues 325 to 338 (HHLHHHHHHHHRQL) show a composition bias toward basic residues. Composition is skewed to gly residues over residues 351 to 368 (GGGSGNDGASEGGSGESG) and 389 to 400 (SGGGGAGSGRRS). Acidic residues predominate over residues 407 to 419 (EPAEDDEDYELDV). The span at 451–464 (SDPVNLSIVKQQQD) shows a compositional bias: polar residues. A C2H2-type 1; degenerate zinc finger spans residues 586–594 (NLKTHLRVH). 2 consecutive C2H2-type zinc fingers follow at residues 600–623 (FACRLCVAMFKQKAHLLKHLCSVH) and 636–658 (YTCCFCSLVFETLQELVRHLSGH).

The protein localises to the nucleus. In terms of biological role, transcription factor required for terminalia development. Negative regulator of the JAK/STAT pathway: represses JAK/STAT-dependent expression of ventral veins lacking (vvl) in the posterior spiracles. This Culex quinquefasciatus (Southern house mosquito) protein is Transcription factor Ken 2.